We begin with the raw amino-acid sequence, 72 residues long: Prokaryotic ubiquitin-like protein Pup (72 aa).

Residues 1–10 (MATKDTGGGQ) are compositionally biased toward gly residues. The segment at 1 to 45 (MATKDTGGGQQKATRSTEEVEEQAQDAQASEDLKERQEKLSDDVD) is disordered. Residues 10–60 (QQKATRSTEEVEEQAQDAQASEDLKERQEKLSDDVDSVLDEIDDVLEENAE) are a coiled coil. Residues 28 to 66 (QASEDLKERQEKLSDDVDSVLDEIDDVLEENAEDFVRSF) are ARC ATPase binding. The span at 31-42 (EDLKERQEKLSD) shows a compositional bias: basic and acidic residues. Residue glutamate 72 forms an Isoglutamyl lysine isopeptide (Glu-Lys) (interchain with K-? in acceptor proteins) linkage.

Belongs to the prokaryotic ubiquitin-like protein family. As to quaternary structure, strongly interacts with the proteasome-associated ATPase ARC through a hydrophobic interface; the interacting region of Pup lies in its C-terminal half. There is one Pup binding site per ARC hexamer ring.

Its pathway is protein degradation; proteasomal Pup-dependent pathway. In terms of biological role, protein modifier that is covalently attached to lysine residues of substrate proteins, thereby targeting them for proteasomal degradation. The tagging system is termed pupylation. The protein is Prokaryotic ubiquitin-like protein Pup of Streptomyces coelicolor (strain ATCC BAA-471 / A3(2) / M145).